Reading from the N-terminus, the 337-residue chain is UDP-N-acetylenolpyruvoylglucosamine reductase (337 aa).

The region spanning 16–187 (ALPGRAARYQ…TSVIFRLAKA (172 aa)) is the FAD-binding PCMH-type domain. Arg-160 is a catalytic residue. Catalysis depends on Ser-237, which acts as the Proton donor. Residue Glu-333 is part of the active site.

FAD is required as a cofactor.

The protein localises to the cytoplasm. The enzyme catalyses UDP-N-acetyl-alpha-D-muramate + NADP(+) = UDP-N-acetyl-3-O-(1-carboxyvinyl)-alpha-D-glucosamine + NADPH + H(+). Its pathway is cell wall biogenesis; peptidoglycan biosynthesis. Its function is as follows. Cell wall formation. This is UDP-N-acetylenolpyruvoylglucosamine reductase from Dechloromonas aromatica (strain RCB).